The primary structure comprises 318 residues: Pyrimidine-specific ribonucleoside hydrolase RihA (318 aa).

His-240 is a catalytic residue.

Belongs to the IUNH family. RihA subfamily.

In terms of biological role, hydrolyzes cytidine or uridine to ribose and cytosine or uracil, respectively. This Shewanella baltica (strain OS185) protein is Pyrimidine-specific ribonucleoside hydrolase RihA.